We begin with the raw amino-acid sequence, 297 residues long: Carbamate kinase (297 aa).

It belongs to the carbamate kinase family.

Its subcellular location is the cytoplasm. It carries out the reaction hydrogencarbonate + NH4(+) + ATP = carbamoyl phosphate + ADP + H2O + H(+). The catalysed reaction is carbamate + ATP = carbamoyl phosphate + ADP. The enzyme catalyses hydrogencarbonate + NH4(+) = carbamate + H2O + H(+). The protein operates within nitrogen metabolism; (S)-allantoin degradation. Its function is as follows. Kinase involved in the anaerobic nitrogen utilization via the assimilation of allantoin. Catalyzes the transfer of a phosphate group from carbamoyl phosphate to ADP to produce ATP and leave carbamate, which spontaneously hydrolyzes to ammonia and hydrogencarbonate. The sequence is that of Carbamate kinase from Escherichia coli (strain K12).